The primary structure comprises 215 residues: FBD domain-containing protein At3g58975 (215 aa).

The FBD domain occupies 122–199; the sequence is RSLTSCPVKK…KLSSCNVQLL (78 aa).

The sequence is that of FBD domain-containing protein At3g58975 from Arabidopsis thaliana (Mouse-ear cress).